The following is a 695-amino-acid chain: Methionine synthase reductase (695 aa).

The 144-residue stretch at 4–147 (FLLLYATQRG…VVEPWINGLW (144 aa)) folds into the Flavodoxin-like domain. Residues 10-14 (TQRGQ) and 93-124 (LLGL…QRFY) contribute to the FMN site. The segment at 166–245 (TLTMASHASR…ASLNIPSLPP (80 aa)) is hinge. A phosphoserine mark is found at Ser171 and Ser187. One can recognise an FAD-binding FR-type domain in the interval 269–531 (DPVFHVPVSK…PRTTNSFHLP (263 aa)). NADP(+) is bound at residue Lys289. Residues 449–452 (RPYS) and 485–488 (GVCT) contribute to the FAD site. Residues 608–609 (SR), 622–624 (YVQ), and Asp657 contribute to the NADP(+) site. Trp695 provides a ligand contact to FAD.

In terms of assembly, forms a multiprotein complex with MMACHC, MMADHC and MTR. Requires FAD as cofactor. FMN serves as cofactor.

It localises to the cytoplasm. It carries out the reaction 2 methylcob(III)alamin-[methionine synthase] + 2 S-adenosyl-L-homocysteine + NADP(+) + H(+) = 2 cob(II)alamin-[methionine synthase] + 2 S-adenosyl-L-methionine + NADPH. It catalyses the reaction 2 cob(II)alamin + A + 2 H2O + 2 H(+) = 2 aquacob(III)alamin + AH2. Key enzyme in methionine and folate homeostasis responsible for the reactivation of methionine synthase (MTR/MS) activity by catalyzing the reductive methylation of MTR-bound cob(II)alamin. Cobalamin (vitamin B12) forms a complex with MTR to serve as an intermediary in methyl transfer reactions that cycles between MTR-bound methylcob(III)alamin and MTR bound-cob(I)alamin forms, and occasional oxidative escape of the cob(I)alamin intermediate during the catalytic cycle leads to the inactive cob(II)alamin species. The processing of cobalamin in the cytosol occurs in a multiprotein complex composed of at least MMACHC, MMADHC, MTRR and MTR which may contribute to shuttle safely and efficiently cobalamin towards MTR in order to produce methionine. Also necessary for the utilization of methyl groups from the folate cycle, thereby affecting transgenerational epigenetic inheritance. Also acts as a molecular chaperone for methionine synthase by stabilizing apoMTR and incorporating methylcob(III)alamin into apoMTR to form the holoenzyme. Also serves as an aquacob(III)alamin reductase by reducing aquacob(III)alamin to cob(II)alamin; this reduction leads to stimulation of the conversion of apoMTR and aquacob(III)alamin to MTR holoenzyme. This Bos taurus (Bovine) protein is Methionine synthase reductase (MTRR).